We begin with the raw amino-acid sequence, 303 residues long: Putative 1-phosphofructokinase (303 aa).

Residues 217–222 (SDGDKG) and 249–250 (GD) contribute to the ATP site. The Proton acceptor role is filled by D250.

The protein belongs to the carbohydrate kinase PfkB family.

It catalyses the reaction beta-D-fructose 1-phosphate + ATP = beta-D-fructose 1,6-bisphosphate + ADP + H(+). In terms of biological role, catalyzes the ATP-dependent phosphorylation of fructose-l-phosphate to fructose-l,6-bisphosphate. This Mycoplasma genitalium (strain ATCC 33530 / DSM 19775 / NCTC 10195 / G37) (Mycoplasmoides genitalium) protein is Putative 1-phosphofructokinase (fruK).